The primary structure comprises 161 residues: Protein-export protein SecB (161 aa).

The protein belongs to the SecB family. Homotetramer, a dimer of dimers. One homotetramer interacts with 1 SecA dimer.

It is found in the cytoplasm. In terms of biological role, one of the proteins required for the normal export of preproteins out of the cell cytoplasm. It is a molecular chaperone that binds to a subset of precursor proteins, maintaining them in a translocation-competent state. It also specifically binds to its receptor SecA. The chain is Protein-export protein SecB from Pseudomonas fluorescens (strain Pf0-1).